We begin with the raw amino-acid sequence, 312 residues long: Olfactory receptor 51B6 (312 aa).

Topologically, residues 1–23 (MGLNKSASTFQLTGFPGMEKAHH) are extracellular. A glycan (N-linked (GlcNAc...) asparagine) is linked at N4. The chain crosses the membrane as a helical span at residues 24 to 44 (WIFIPLLAAYISILLGNGTLL). Topologically, residues 45 to 52 (FLIRNDHN) are cytoplasmic. The chain crosses the membrane as a helical span at residues 53-73 (LHEPMYYFLAMLAATDLGVTL). Over 74–97 (TTMPTVLGVLWLDHREIGHGACFS) the chain is Extracellular. C95 and C187 form a disulfide bridge. Residues 98–118 (QAYFIHTLSVMESGVLLAMAY) traverse the membrane as a helical segment. At 119–137 (DCFITIRSPLRYTSILTNT) the chain is on the cytoplasmic side. Residues 138 to 158 (QVMKIGVRVLTRAGLSIMPIV) traverse the membrane as a helical segment. Topologically, residues 159-194 (VRLHWFPYCRSHVLSHAFCLHQDVIKLACADITFNR) are extracellular. The chain crosses the membrane as a helical span at residues 195–215 (LYPVVVLFAMVLLDFLIIFFS). The Cytoplasmic portion of the chain corresponds to 216-235 (YILILKTVMGIGSGGERAKA). The chain crosses the membrane as a helical span at residues 236–256 (LNTCVSHICCILVFYVTVVCL). Residues 257–271 (TFIHRFGKHVPHVVH) lie on the Extracellular side of the membrane. A helical membrane pass occupies residues 272 to 292 (ITMSYIHFLFPPFMNPFIYSI). Topologically, residues 293 to 312 (KTKQIQSGILRLFSLPHSRA) are cytoplasmic.

The protein belongs to the G-protein coupled receptor 1 family.

The protein localises to the cell membrane. In terms of biological role, odorant receptor. In Homo sapiens (Human), this protein is Olfactory receptor 51B6 (OR51B6).